Reading from the N-terminus, the 130-residue chain is MAQNNKQTKQEINEDVVPYDELYELLMVADKDNVHKDEIIITLNNEKKLTEEKYMVCRKSYEELAQDYRSIKHKMNVFAPKGSLYNNYVKPKLLGSLTEERKREINSNFEKQRLEIINKEHEALKKLRGD.

This is an uncharacterized protein from Sputnik virophage.